Consider the following 711-residue polypeptide: Polyribonucleotide nucleotidyltransferase (711 aa).

Mg(2+) contacts are provided by D486 and D492. One can recognise a KH domain in the interval 553–612; it reads PRIHTIKINPDKIKDVIGKGGSVIRALTEETGTTIEIEDDGTVKIAATDGEKAKHAIRRI. The 69-residue stretch at 622-690 folds into the S1 motif domain; the sequence is GRVYNGKVTR…RQGRIRLSIK (69 aa). Residues 690–711 are disordered; it reads KEATEQSQPAAALEAPAAEQGE. Residues 698–711 show a composition bias toward low complexity; that stretch reads PAAALEAPAAEQGE.

This sequence belongs to the polyribonucleotide nucleotidyltransferase family. Component of the RNA degradosome, which is a multiprotein complex involved in RNA processing and mRNA degradation. Mg(2+) serves as cofactor.

The protein resides in the cytoplasm. It catalyses the reaction RNA(n+1) + phosphate = RNA(n) + a ribonucleoside 5'-diphosphate. In terms of biological role, involved in mRNA degradation. Catalyzes the phosphorolysis of single-stranded polyribonucleotides processively in the 3'- to 5'-direction. The sequence is that of Polyribonucleotide nucleotidyltransferase from Escherichia coli O127:H6 (strain E2348/69 / EPEC).